The chain runs to 371 residues: Putative glutamate--cysteine ligase 2 (371 aa).

The protein belongs to the glutamate--cysteine ligase type 2 family. YbdK subfamily.

The enzyme catalyses L-cysteine + L-glutamate + ATP = gamma-L-glutamyl-L-cysteine + ADP + phosphate + H(+). Its function is as follows. ATP-dependent carboxylate-amine ligase which exhibits weak glutamate--cysteine ligase activity. This Burkholderia cenocepacia (strain HI2424) protein is Putative glutamate--cysteine ligase 2.